Consider the following 380-residue polypeptide: 1-deoxy-D-xylulose 5-phosphate reductoisomerase 2 (380 aa).

8 residues coordinate NADPH: serine 10, glycine 11, serine 12, isoleucine 13, glycine 36, lysine 37, asparagine 38, and asparagine 120. Position 121 (lysine 121) interacts with 1-deoxy-D-xylulose 5-phosphate. Glutamate 122 serves as a coordination point for NADPH. Aspartate 146 lines the Mn(2+) pocket. 1-deoxy-D-xylulose 5-phosphate contacts are provided by serine 147, glutamate 148, serine 172, and histidine 195. Residue glutamate 148 coordinates Mn(2+). Glycine 201 provides a ligand contact to NADPH. Serine 208, asparagine 213, lysine 214, and glutamate 217 together coordinate 1-deoxy-D-xylulose 5-phosphate. Residue glutamate 217 coordinates Mn(2+).

Belongs to the DXR family. Requires Mg(2+) as cofactor. Mn(2+) serves as cofactor.

The enzyme catalyses 2-C-methyl-D-erythritol 4-phosphate + NADP(+) = 1-deoxy-D-xylulose 5-phosphate + NADPH + H(+). It participates in isoprenoid biosynthesis; isopentenyl diphosphate biosynthesis via DXP pathway; isopentenyl diphosphate from 1-deoxy-D-xylulose 5-phosphate: step 1/6. In terms of biological role, catalyzes the NADPH-dependent rearrangement and reduction of 1-deoxy-D-xylulose-5-phosphate (DXP) to 2-C-methyl-D-erythritol 4-phosphate (MEP). The polypeptide is 1-deoxy-D-xylulose 5-phosphate reductoisomerase 2 (Bacillus anthracis).